The sequence spans 843 residues: Eisosome protein 1 (843 aa).

Residue serine 2 is modified to N-acetylserine. At serine 2 the chain carries Phosphoserine. The tract at residues 13–44 is disordered; sequence HNIGKTSGGGSRTSSITSSKKSLKHGSKSLRK. The span at 33–44 shows a compositional bias: basic residues; it reads KSLKHGSKSLRK. Phosphoserine occurs at positions 88 and 130. Residues 120-174 are disordered; the sequence is KMGPKVVRNNSITSATSKTSKESQTKRKSKESPGAAASKAYSMTMETTSLSSQTN. Composition is skewed to polar residues over residues 127-137 and 163-174; these read RNNSITSATSK and TMETTSLSSQTN. Phosphoserine is present on residues serine 182, serine 401, serine 584, and serine 710. Residues 717-843 form a disordered region; the sequence is DLPTQLEKIE…QDAISNQEKK (127 aa). Residue threonine 720 is modified to Phosphothreonine. Low complexity predominate over residues 752–764; sequence STAAKEATETSSA. Residues serine 763 and serine 775 each carry the phosphoserine modification. The span at 781–797 shows a compositional bias: basic and acidic residues; sequence SGKEDANDCKSAEHSKE. Positions 798 to 810 are enriched in polar residues; that stretch reads ISVSQKAGNNKSL. Phosphoserine occurs at positions 816, 828, 829, and 838.

The protein belongs to the EIS1 family.

Its subcellular location is the cytoplasmic granule. The protein resides in the cell membrane. Required for normal formation of eisosomes, large cytoplasmic protein assemblies that localize to specialized domains on plasma membrane and mark the site of endocytosis. The polypeptide is Eisosome protein 1 (EIS1) (Saccharomyces cerevisiae (strain RM11-1a) (Baker's yeast)).